We begin with the raw amino-acid sequence, 867 residues long: Putative ribosome biogenesis ATPase nvl (867 aa).

Residues 70–203 are disordered; that stretch reads LSSCESSENE…NNNNGNNKDN (134 aa). Residues 110–122 show a composition bias toward polar residues; sequence EQLTSQYKQNIKN. 3 stretches are compositionally biased toward low complexity: residues 123–132, 141–172, and 180–203; these read TPPTTTTTTP, IPSNVNSNNNNNNNNNAINSNTTTNNVNTPNS, and NSSNGNNVFQFSNNNNNNGNNKDN. 257–264 is a binding site for ATP; that stretch reads GPSGCGKT. The segment at 351-370 is disordered; that stretch reads SSNNSTNEPNEQTEQQQQQQ. Position 607 to 614 (607 to 614) interacts with ATP; that stretch reads GPPGCGKT. Residues 834-843 show a composition bias toward basic and acidic residues; that stretch reads DINKSRDKKP. Residues 834 to 855 are disordered; sequence DINKSRDKKPNNSNNIPITNNI. Residues 844-855 are compositionally biased toward low complexity; it reads NNSNNIPITNNI.

The protein belongs to the AAA ATPase family.

The protein resides in the nucleus. Its subcellular location is the nucleolus. The protein localises to the nucleoplasm. Functionally, involved in ribosome biogenesis. This is Putative ribosome biogenesis ATPase nvl (nvl) from Dictyostelium discoideum (Social amoeba).